The sequence spans 345 residues: Eukaryotic translation initiation factor 3 subunit F (345 aa).

The MPN domain occupies 30-166 (VVIHPQALFS…TRAYISAPVG (137 aa)). The disordered stretch occupies residues 308 to 345 (GGESGNAESGQRGGQRGGKGGRGGQQRTQDRSGEEARA). Residues 318-331 (QRGGQRGGKGGRGG) show a composition bias toward gly residues. Positions 335 to 345 (TQDRSGEEARA) are enriched in basic and acidic residues.

It belongs to the eIF-3 subunit F family. As to quaternary structure, component of the eukaryotic translation initiation factor 3 (eIF-3) complex.

The protein localises to the cytoplasm. In terms of biological role, component of the eukaryotic translation initiation factor 3 (eIF-3) complex, which is involved in protein synthesis of a specialized repertoire of mRNAs and, together with other initiation factors, stimulates binding of mRNA and methionyl-tRNAi to the 40S ribosome. The eIF-3 complex specifically targets and initiates translation of a subset of mRNAs involved in cell proliferation. The chain is Eukaryotic translation initiation factor 3 subunit F from Aspergillus oryzae (strain ATCC 42149 / RIB 40) (Yellow koji mold).